Consider the following 172-residue polypeptide: Adenine phosphoribosyltransferase (172 aa).

It belongs to the purine/pyrimidine phosphoribosyltransferase family. Homodimer.

Its subcellular location is the cytoplasm. It carries out the reaction AMP + diphosphate = 5-phospho-alpha-D-ribose 1-diphosphate + adenine. It functions in the pathway purine metabolism; AMP biosynthesis via salvage pathway; AMP from adenine: step 1/1. Its function is as follows. Catalyzes a salvage reaction resulting in the formation of AMP, that is energically less costly than de novo synthesis. The chain is Adenine phosphoribosyltransferase from Latilactobacillus sakei subsp. sakei (strain 23K) (Lactobacillus sakei subsp. sakei).